The primary structure comprises 277 residues: Co-chaperone protein DjlA (277 aa).

Over 1–6 (MRYWGK) the chain is Periplasmic. A helical transmembrane segment spans residues 7–31 (LLGLVLGVMYAPGVVGALLGLLVGH). Over 32–277 (MVDRALGAKR…DLIKREKGFK (246 aa)) the chain is Cytoplasmic. Positions 211-277 (DACKVLGVNS…DLIKREKGFK (67 aa)) constitute a J domain.

Homodimer.

It localises to the cell inner membrane. Regulatory DnaK co-chaperone. Direct interaction between DnaK and DjlA is needed for the induction of the wcaABCDE operon, involved in the synthesis of a colanic acid polysaccharide capsule, possibly through activation of the RcsB/RcsC phosphotransfer signaling pathway. The colanic acid capsule may help the bacterium survive conditions outside the host. This is Co-chaperone protein DjlA from Yersinia pestis.